The chain runs to 648 residues: Biosynthetic arginine decarboxylase (648 aa).

An N6-(pyridoxal phosphate)lysine modification is found at Lys-109. 291-301 (IDVGGGLGIDF) serves as a coordination point for substrate.

It belongs to the Orn/Lys/Arg decarboxylase class-II family. SpeA subfamily. It depends on Mg(2+) as a cofactor. Requires pyridoxal 5'-phosphate as cofactor.

The catalysed reaction is L-arginine + H(+) = agmatine + CO2. It functions in the pathway amine and polyamine biosynthesis; agmatine biosynthesis; agmatine from L-arginine: step 1/1. Its function is as follows. Catalyzes the biosynthesis of agmatine from arginine. The sequence is that of Biosynthetic arginine decarboxylase from Prochlorococcus marinus (strain MIT 9215).